Reading from the N-terminus, the 263-residue chain is Indole-3-glycerol phosphate synthase (263 aa).

Belongs to the TrpC family.

It carries out the reaction 1-(2-carboxyphenylamino)-1-deoxy-D-ribulose 5-phosphate + H(+) = (1S,2R)-1-C-(indol-3-yl)glycerol 3-phosphate + CO2 + H2O. Its pathway is amino-acid biosynthesis; L-tryptophan biosynthesis; L-tryptophan from chorismate: step 4/5. This chain is Indole-3-glycerol phosphate synthase, found in Laribacter hongkongensis (strain HLHK9).